We begin with the raw amino-acid sequence, 159 residues long: Transcriptional repressor NrdR (159 aa).

The segment at 3–34 (CPTCQNTDSRVLESRSADTGKSVRRRRECLNC) is a zinc-finger region. Residues 49 to 139 (ISVIKKDGSR…VYRKFNGVKD (91 aa)) enclose the ATP-cone domain.

It belongs to the NrdR family. Zn(2+) serves as cofactor.

Its function is as follows. Negatively regulates transcription of bacterial ribonucleotide reductase nrd genes and operons by binding to NrdR-boxes. The chain is Transcriptional repressor NrdR from Prochlorococcus marinus subsp. pastoris (strain CCMP1986 / NIES-2087 / MED4).